Here is a 330-residue protein sequence, read N- to C-terminus: D-xylose-binding periplasmic protein (330 aa).

The signal sequence occupies residues 1–23 (MKIKNILLTLCTSLLLTNVAAHA).

Belongs to the bacterial solute-binding protein 2 family.

The protein localises to the periplasm. In terms of biological role, involved in the high-affinity D-xylose membrane transport system. Binds with high affinity to xylose. The sequence is that of D-xylose-binding periplasmic protein (xylF) from Escherichia coli (strain K12).